The sequence spans 1305 residues: MYSVEDLLISHGYKLSRKLPAPHEDDGERRQPARTTVPAGPGLLNGCDDGPAALPRGKASPGTGLLSDPESRRLGPRGHGERPSTAAAARISEAGFYHQPVLAWSSQPLTGRSHAYWRRREQEAREDPGGRGPVPSLPTHPREGPWEVGGRSEHVMKKAVWEDELGMAGPARWQDVSVRSWNQPPRLGRQMSDGVGEKLFQDLYPFMLGEHGLTSQSKGKSQSLPRVLSPESLSCMEVPIPLSDGHLPGVPKVPLQPPNCASNLESTRNPKKAGTSAPLPQPRFGRPLKPPSYGSQPHSKAGAENGSYTDSRQLDPGAAHSARTNSARQDLYGPDPGLEPPVYVPPPSYKSPPQPAAHPCPEEAVSRHEGRGRRVPQHPMERPAAGGQPLSGSRGAGSEWGASPCSPVGVPPQPHHTTAYDGSILIIPFDDPRIRHIKLPRPHGFWEDVKLDGAVPAPDPRSLQQEGAVWGPSGKERGPAPADPSPSWLWGQPPRNGENGSSPDQRDPCIVTQRKQPDVSGSPQEYPESLVSSPSPQGESSCEMQTQLRKFEAGLQPKRSSKKKTSETIFCLVSIPVKSESQLPGTDTNNNDLKQSASLQEQSVLSLSSTDLELQALTGSMATRTELPRPDPGGPGRGRQADDLRFPSPAKHRALAWPGPWPGHHFRDQQTQTSFAHEPQSLQPLPGERPGGSPDPVLPPRCLDPAPFEVQMHMALASSDPNQRPGAHSPKSQGSLSPSSNSAFSGSSWPRNQGPVPRASLGQQGSDGPGRRASPVSRGEVIKGETTGPCNSRQLFGQFLLKPVSRRPWDLISQLESFNKELQEEEGSSGSSSDGSGSEDSDTELPWGSCARPAPQLPGLLKDIVPEDPRTRPGRVKSKSESWSEEGRPRSPRPWQAEGRGSVWLSPPGSWIAEDGDREVEDRVAQLAVSPRPVKRAISSGLNDAKPEPPPDPAEQREPLPSQELPGSRGAVELSAAGPPRAGGGEQGSTRAPLSLAGKSRGLSAPDLRSVGLTLVQEHSTSQLAGSPGDANAIEIPPNESLEARAARILGIEVAVESLLPGAQRAGQRRHPEPDGSALRPESPRQEAAASLAQPNESTAPADAFYGRRKCGWTKSPLFVGERDSTRQVPRASEPADVDGAVPTKAPETPPSPLESQPFLPKDVETKPPFRSTLFHFIERTPNLAFSEKKLRNTSRVIESLQEKLVSPPRKADPDRLTRMKEVSSVSRMRLLTSRAADSAEEPKAERGPGAWLGGLVAPSAGHKLSDPQGALSLEADGHPAARRENGGRDFWCPDSYDPSRVERV.

Disordered regions lie at residues 13-86 (YKLS…PSTA), 120-151 (REQE…VGGR), 249-419 (GVPK…HTTA), 450-545 (KLDG…CEMQ), 575-604 (IPVK…EQSV), 616-795 (ALTG…SRQL), and 818-1005 (FNKE…GLSA). Composition is skewed to basic and acidic residues over residues 21–31 (APHEDDGERRQ), 69–82 (PESR…HGER), 120–129 (REQEAREDPG), and 140–151 (HPREGPWEVGGR). The span at 337–358 (GLEPPVYVPPPSYKSPPQPAAH) shows a compositional bias: pro residues. Over residues 360–369 (CPEEAVSRHE) the composition is skewed to basic and acidic residues. Composition is skewed to polar residues over residues 530 to 545 (LVSS…CEMQ) and 579 to 594 (SESQ…NDLK). Positions 595–604 (QSASLQEQSV) are enriched in low complexity. A compositionally biased stretch (polar residues) spans 669-683 (QQTQTSFAHEPQSLQ). Residues 729–748 (SPKSQGSLSPSSNSAFSGSS) are compositionally biased toward low complexity. Phosphoserine is present on Ser-841. Composition is skewed to basic and acidic residues over residues 878 to 889 (SKSESWSEEGRP) and 945 to 958 (AKPE…EQRE). A phosphoserine mark is found at Ser-1004, Ser-1010, Ser-1152, and Ser-1239. Disordered stretches follow at residues 1062–1166 (GAQR…DVET) and 1234–1305 (SRAA…VERV). Residues 1276–1288 (ADGHPAARRENGG) are compositionally biased toward basic and acidic residues.

It localises to the cell junction. It is found in the adherens junction. The chain is Junctional cadherin 5-associated protein (JCAD) from Bos taurus (Bovine).